Here is a 277-residue protein sequence, read N- to C-terminus: Shikimate dehydrogenase (NADP(+)) (277 aa).

Shikimate-binding positions include 15-17 (SLS) and threonine 62. The Proton acceptor role is filled by lysine 66. 2 residues coordinate shikimate: asparagine 87 and aspartate 102. Residues 127 to 131 (GAGGA), 151 to 156 (NRTVDK), and isoleucine 219 each bind NADP(+). Tyrosine 221 lines the shikimate pocket. An NADP(+)-binding site is contributed by glycine 242.

The protein belongs to the shikimate dehydrogenase family. Homodimer.

The enzyme catalyses shikimate + NADP(+) = 3-dehydroshikimate + NADPH + H(+). The protein operates within metabolic intermediate biosynthesis; chorismate biosynthesis; chorismate from D-erythrose 4-phosphate and phosphoenolpyruvate: step 4/7. Involved in the biosynthesis of the chorismate, which leads to the biosynthesis of aromatic amino acids. Catalyzes the reversible NADPH linked reduction of 3-dehydroshikimate (DHSA) to yield shikimate (SA). This chain is Shikimate dehydrogenase (NADP(+)), found in Bacillus cereus (strain G9842).